A 46-amino-acid polypeptide reads, in one-letter code: Mu-segestritoxin-Sf1d (46 aa).

4 disulfide bridges follow: C3-C19, C10-C22, C18-C42, and C24-C40. The interval 31-33 is keys region for toxin activity; the sequence is RPW.

The protein belongs to the neurotoxin 16 (SFI) family. In terms of tissue distribution, expressed by the venom gland.

It localises to the secreted. Functionally, insecticidal toxin. It inhibits insect voltage-gated sodium channels (Nav) by partially blocking the channel pore in DUM neurons from the American cockroach, not by acting as a gating modifier. The inhibition is only partially reversible after prolonged washout. In vivo, the toxin causes flaccid paralysis followed by death when injected into Heliothis virescens larvae. It also causes uncoordinated movements followed by full paralysis to sheep blowflies (Lucilia cuprina). When the toxin is fused to snowdrop lectin, it is orally active against larvae of the tomato moth (Laconobia oleracea), the rice brown planthopper (Nilaparvata lugens), and the peach-potato aphid (Myzus persicae). The polypeptide is Mu-segestritoxin-Sf1d (Segestria florentina (Tube-web spider)).